Reading from the N-terminus, the 253-residue chain is MPNRTVPTLEELLTLNKVQQTLRLTEVNQHLESLTAQERVVWGLENLQGNHALSSSFGIQAAVMLHLLTSVKSDIPVVLTDTGYLFPETYQFIDELTERLNLNLKVYSAPVSAAWQEARYGKLWEQGVEGIERYNQINKVEPMRRALDELNIGTWFSGLRREQSQSRASLPILSVQNGVFKFLPVIDWTNKEVHYYLKDNDLPYHPLWEQGYLSVGDTHTTQKWQPGMNEEQTRFFGLKRECGLHEDHNDTHQ.

The active-site Nucleophile; cysteine thiosulfonate intermediate is cysteine 242.

This sequence belongs to the PAPS reductase family. CysH subfamily.

Its subcellular location is the cytoplasm. It carries out the reaction [thioredoxin]-disulfide + sulfite + adenosine 3',5'-bisphosphate + 2 H(+) = [thioredoxin]-dithiol + 3'-phosphoadenylyl sulfate. Its pathway is sulfur metabolism; hydrogen sulfide biosynthesis; sulfite from sulfate: step 3/3. Its function is as follows. Catalyzes the formation of sulfite from phosphoadenosine 5'-phosphosulfate (PAPS) using thioredoxin as an electron donor. This is Phosphoadenosine 5'-phosphosulfate reductase from Vibrio cholerae serotype O1 (strain ATCC 39541 / Classical Ogawa 395 / O395).